The primary structure comprises 370 residues: Holliday junction branch migration complex subunit RuvB 2 (370 aa).

The interval 1–54 (MAIISSRAAGAEDPGQRQQKSSARRRESKLAFARAEGLLQPQAHPSEAQEESLR) is disordered. A large ATPase domain (RuvB-L) region spans residues 13 to 214 (DPGQRQQKSS…FGQVQRLRFY (202 aa)). ATP is bound by residues Leu53, Arg54, Gly95, Lys98, Thr99, Thr100, 161-163 (EDF), Arg204, Tyr214, and Arg251. Thr99 provides a ligand contact to Mg(2+). Positions 215–285 (EPHELAEIVL…VAAAALELFQ (71 aa)) are small ATPAse domain (RuvB-S). The interval 288–370 (PMGLDWTDRK…TAQSPLPVWS (83 aa)) is head domain (RuvB-H). Arg343 and Arg348 together coordinate DNA.

This sequence belongs to the RuvB family. In terms of assembly, homohexamer. Forms an RuvA(8)-RuvB(12)-Holliday junction (HJ) complex. HJ DNA is sandwiched between 2 RuvA tetramers; dsDNA enters through RuvA and exits via RuvB. An RuvB hexamer assembles on each DNA strand where it exits the tetramer. Each RuvB hexamer is contacted by two RuvA subunits (via domain III) on 2 adjacent RuvB subunits; this complex drives branch migration. In the full resolvosome a probable DNA-RuvA(4)-RuvB(12)-RuvC(2) complex forms which resolves the HJ.

Its subcellular location is the cytoplasm. It carries out the reaction ATP + H2O = ADP + phosphate + H(+). Its function is as follows. The RuvA-RuvB-RuvC complex processes Holliday junction (HJ) DNA during genetic recombination and DNA repair, while the RuvA-RuvB complex plays an important role in the rescue of blocked DNA replication forks via replication fork reversal (RFR). RuvA specifically binds to HJ cruciform DNA, conferring on it an open structure. The RuvB hexamer acts as an ATP-dependent pump, pulling dsDNA into and through the RuvAB complex. RuvB forms 2 homohexamers on either side of HJ DNA bound by 1 or 2 RuvA tetramers; 4 subunits per hexamer contact DNA at a time. Coordinated motions by a converter formed by DNA-disengaged RuvB subunits stimulates ATP hydrolysis and nucleotide exchange. Immobilization of the converter enables RuvB to convert the ATP-contained energy into a lever motion, pulling 2 nucleotides of DNA out of the RuvA tetramer per ATP hydrolyzed, thus driving DNA branch migration. The RuvB motors rotate together with the DNA substrate, which together with the progressing nucleotide cycle form the mechanistic basis for DNA recombination by continuous HJ branch migration. Branch migration allows RuvC to scan DNA until it finds its consensus sequence, where it cleaves and resolves cruciform DNA. The polypeptide is Holliday junction branch migration complex subunit RuvB 2 (Synechococcus sp. (strain JA-3-3Ab) (Cyanobacteria bacterium Yellowstone A-Prime)).